A 448-amino-acid chain; its full sequence is Fibulin-5 (448 aa).

The signal sequence occupies residues 1-23 (MPGIKRILTVTILALCLPSPGNA). The EGF-like 1; calcium-binding domain occupies 42–82 (DIDECRTIPEACRGDMMCVNQNGRYLCIPRTNPVYRGPYSN). Disulfide bonds link C46–C59, C53–C68, C131–C144, C138–C153, C155–C166, C172–C181, C177–C190, C192–C205, C211–C221, C217–C230, C232–C245, C251–C262, C258–C271, C273–C286, C292–C305, C299–C314, and C320–C332. The short motif at 54-56 (RGD) is the Cell attachment site element. Residues 127–167 (DVDECATDSHQCNPTQICINTEGGYTCSCTDGYWLLEGQCL) enclose the EGF-like 2; calcium-binding domain. The EGF-like 3; calcium-binding domain occupies 168–206 (DIDECRYGYCQQLCANVPGSYSCTCNPGFTLNEDGRSCQ). The 40-residue stretch at 207–246 (DVNECATENPCVQTCVNTYGSFICRCDPGYELEEDGVHCS) folds into the EGF-like 4; calcium-binding domain. Residues 245 to 448 (CSDMDECSFS…LRIYVSQYPF (204 aa)) are interaction with LOXL1. Residues 247-287 (DMDECSFSEFLCQHECVNQPGTYFCSCPPGYILLDDNRSCQ) form the EGF-like 5; calcium-binding domain. 2 N-linked (GlcNAc...) asparagine glycosylation sites follow: N283 and N296. The EGF-like 6; calcium-binding domain occupies 288-333 (DINECEHRNHTCNLQQTCYNLQGGFKCIDPIRCEEPYLRISDNRCM).

Belongs to the fibulin family. Homodimer. Monomer, homodimerizes in presence of Ca(2+). Interacts with ELN. Interacts (via N-terminus) with the integrins ITGAV/ITGB3, ITGAV/ITGB5 and ITGA9/ITGB1. Interacts with FBN1 (via N-terminal domain). Forms a ternary complex with ELN and FBN1. Interacts with EFEMP2 with moderate affinity. Interacts with LOXL1. N-glycosylated.

It is found in the secreted. The protein localises to the extracellular space. It localises to the extracellular matrix. Essential for elastic fiber formation, is involved in the assembly of continuous elastin (ELN) polymer and promotes the interaction of microfibrils and ELN. Stabilizes and organizes elastic fibers in the skin, lung and vasculature. Promotes adhesion of endothelial cells through interaction of integrins and the RGD motif. Vascular ligand for integrin receptors which may play a role in vascular development and remodeling. May act as an adapter that mediates the interaction between FBN1 and ELN. The chain is Fibulin-5 (FBLN5) from Pongo abelii (Sumatran orangutan).